Consider the following 238-residue polypeptide: Pyridoxine 5'-phosphate synthase (238 aa).

2 residues coordinate 3-amino-2-oxopropyl phosphate: Asn7 and Arg18. Catalysis depends on His43, which acts as the Proton acceptor. Residues Arg45 and His50 each coordinate 1-deoxy-D-xylulose 5-phosphate. Glu70 acts as the Proton acceptor in catalysis. Thr100 serves as a coordination point for 1-deoxy-D-xylulose 5-phosphate. Catalysis depends on His190, which acts as the Proton donor. Residues Asp191 and 213 to 214 each bind 3-amino-2-oxopropyl phosphate; that span reads GH.

The protein belongs to the PNP synthase family. As to quaternary structure, homooctamer; tetramer of dimers.

Its subcellular location is the cytoplasm. The enzyme catalyses 3-amino-2-oxopropyl phosphate + 1-deoxy-D-xylulose 5-phosphate = pyridoxine 5'-phosphate + phosphate + 2 H2O + H(+). The protein operates within cofactor biosynthesis; pyridoxine 5'-phosphate biosynthesis; pyridoxine 5'-phosphate from D-erythrose 4-phosphate: step 5/5. In terms of biological role, catalyzes the complicated ring closure reaction between the two acyclic compounds 1-deoxy-D-xylulose-5-phosphate (DXP) and 3-amino-2-oxopropyl phosphate (1-amino-acetone-3-phosphate or AAP) to form pyridoxine 5'-phosphate (PNP) and inorganic phosphate. This Parabacteroides distasonis (strain ATCC 8503 / DSM 20701 / CIP 104284 / JCM 5825 / NCTC 11152) protein is Pyridoxine 5'-phosphate synthase.